An 82-amino-acid chain; its full sequence is Short neurotoxin OKI-10 (82 aa).

The first 20 residues, 1 to 20, serve as a signal peptide directing secretion; it reads KTLLLTLVVVTIVCLDLGYT. 4 cysteine pairs are disulfide-bonded: Cys-23–Cys-44, Cys-37–Cys-61, Cys-63–Cys-74, and Cys-75–Cys-80.

This sequence belongs to the three-finger toxin family. Short-chain subfamily. Type I alpha-neurotoxin sub-subfamily. Expressed by the venom gland.

The protein localises to the secreted. Binds to muscle nicotinic acetylcholine receptor (nAChR) and inhibit acetylcholine from binding to the receptor, thereby impairing neuromuscular transmission. The polypeptide is Short neurotoxin OKI-10 (Laticauda laticaudata (Blue-ringed sea krait)).